Here is a 151-residue protein sequence, read N- to C-terminus: Endoribonuclease YbeY (151 aa).

Zn(2+) is bound by residues H114, H118, and H124.

This sequence belongs to the endoribonuclease YbeY family. Requires Zn(2+) as cofactor.

The protein localises to the cytoplasm. Single strand-specific metallo-endoribonuclease involved in late-stage 70S ribosome quality control and in maturation of the 3' terminus of the 16S rRNA. In Hamiltonella defensa subsp. Acyrthosiphon pisum (strain 5AT), this protein is Endoribonuclease YbeY.